A 515-amino-acid chain; its full sequence is Anthranilate synthase component 1 (515 aa).

Residues Thr-40 and 291–293 (PYM) contribute to the L-tryptophan site. 328–329 (GT) contacts chorismate. Position 361 (Glu-361) interacts with Mg(2+). Residues Tyr-449, Arg-469, 483–485 (GAG), and Gly-485 each bind chorismate. Mg(2+) is bound at residue Glu-498.

It belongs to the anthranilate synthase component I family. In terms of assembly, heterotetramer consisting of two non-identical subunits: a beta subunit (TrpG) and a large alpha subunit (TrpE). Mg(2+) is required as a cofactor.

It catalyses the reaction chorismate + L-glutamine = anthranilate + pyruvate + L-glutamate + H(+). It participates in amino-acid biosynthesis; L-tryptophan biosynthesis; L-tryptophan from chorismate: step 1/5. With respect to regulation, feedback inhibited by tryptophan. Its function is as follows. Part of a heterotetrameric complex that catalyzes the two-step biosynthesis of anthranilate, an intermediate in the biosynthesis of L-tryptophan. In the first step, the glutamine-binding beta subunit (TrpG) of anthranilate synthase (AS) provides the glutamine amidotransferase activity which generates ammonia as a substrate that, along with chorismate, is used in the second step, catalyzed by the large alpha subunit of AS (TrpE) to produce anthranilate. In the absence of TrpG, TrpE can synthesize anthranilate directly from chorismate and high concentrations of ammonia. The polypeptide is Anthranilate synthase component 1 (trpE) (Buchnera aphidicola subsp. Schizaphis graminum (strain Sg)).